The primary structure comprises 396 residues: Tryptophan synthase beta chain (396 aa).

K86 is modified (N6-(pyridoxal phosphate)lysine).

It belongs to the TrpB family. As to quaternary structure, tetramer of two alpha and two beta chains. Pyridoxal 5'-phosphate serves as cofactor.

The catalysed reaction is (1S,2R)-1-C-(indol-3-yl)glycerol 3-phosphate + L-serine = D-glyceraldehyde 3-phosphate + L-tryptophan + H2O. The protein operates within amino-acid biosynthesis; L-tryptophan biosynthesis; L-tryptophan from chorismate: step 5/5. The beta subunit is responsible for the synthesis of L-tryptophan from indole and L-serine. This Pectobacterium atrosepticum (strain SCRI 1043 / ATCC BAA-672) (Erwinia carotovora subsp. atroseptica) protein is Tryptophan synthase beta chain.